A 405-amino-acid chain; its full sequence is L-rhamnonate dehydratase (405 aa).

Residues H33 and R59 each coordinate substrate. Residues D226, E252, and E280 each contribute to the Mg(2+) site. The active-site Proton acceptor is H329. Position 349 (E349) interacts with substrate.

The protein belongs to the mandelate racemase/muconate lactonizing enzyme family. RhamD subfamily. In terms of assembly, homooctamer; tetramer of dimers. Mg(2+) serves as cofactor.

The enzyme catalyses L-rhamnonate = 2-dehydro-3-deoxy-L-rhamnonate + H2O. Catalyzes the dehydration of L-rhamnonate to 2-keto-3-deoxy-L-rhamnonate (KDR). The polypeptide is L-rhamnonate dehydratase (Escherichia coli O81 (strain ED1a)).